Reading from the N-terminus, the 395-residue chain is ATP phosphoribosyltransferase regulatory subunit (395 aa).

The protein belongs to the class-II aminoacyl-tRNA synthetase family. HisZ subfamily. Heteromultimer composed of HisG and HisZ subunits.

Its subcellular location is the cytoplasm. It participates in amino-acid biosynthesis; L-histidine biosynthesis; L-histidine from 5-phospho-alpha-D-ribose 1-diphosphate: step 1/9. In terms of biological role, required for the first step of histidine biosynthesis. May allow the feedback regulation of ATP phosphoribosyltransferase activity by histidine. The chain is ATP phosphoribosyltransferase regulatory subunit from Thioalkalivibrio sulfidiphilus (strain HL-EbGR7).